Consider the following 865-residue polypeptide: Xylosyltransferase 2 (865 aa).

At 1-15 (MVASARVQKLVRRYK) the chain is on the cytoplasmic side. The helical; Signal-anchor for type II membrane protein transmembrane segment at 16–36 (LAIATALAILLLQGLVVWSFS) threads the bilayer. The Lumenal portion of the chain corresponds to 37-865 (GLEEDEPGEK…GPVKADGRLR (829 aa)). Positions 39–155 (EEDEPGEKGR…SVEGAPQPTD (117 aa)) are disordered. A compositionally biased stretch (basic and acidic residues) spans 53-65 (RPLDPGEGSKDTD). A compositionally biased stretch (basic residues) spans 73-82 (SAGRRHGRWR). N-linked (GlcNAc...) asparagine glycosylation occurs at asparagine 122. 4 cysteine pairs are disulfide-bonded: cysteine 162/cysteine 190, cysteine 206/cysteine 448, cysteine 467/cysteine 480, and cysteine 469/cysteine 478. UDP-alpha-D-xylose is bound by residues valine 239, aspartate 267, and 296–298 (TIW). Residue asparagine 327 is glycosylated (N-linked (GlcNAc...) asparagine). Residue 400–401 (DW) coordinates UDP-alpha-D-xylose. UDP-alpha-D-xylose contacts are provided by residues serine 481 and 504–505 (RK). 2 disulfide bridges follow: cysteine 581-cysteine 833 and cysteine 826-cysteine 839. An N-linked (GlcNAc...) asparagine glycan is attached at asparagine 683.

This sequence belongs to the glycosyltransferase 14 family. XylT subfamily. In terms of assembly, monomer. Mg(2+) is required as a cofactor. It depends on Mn(2+) as a cofactor. Post-translationally, contains disulfide bonds. In terms of tissue distribution, detected in brain, liver, lung, kidney, heart, spleen and testis, and at lower levels in skeletal muscle.

The protein resides in the golgi apparatus membrane. Its subcellular location is the secreted. The enzyme catalyses UDP-alpha-D-xylose + L-seryl-[protein] = 3-O-(beta-D-xylosyl)-L-seryl-[protein] + UDP + H(+). It participates in glycan metabolism; chondroitin sulfate biosynthesis. The protein operates within glycan metabolism; heparan sulfate biosynthesis. In terms of biological role, catalyzes the first step in the biosynthesis of chondroitin sulfate, heparan sulfate and dermatan sulfate proteoglycans, such as DCN. Transfers D-xylose from UDP-D-xylose to specific serine residues of the core protein. The polypeptide is Xylosyltransferase 2 (Xylt2) (Mus musculus (Mouse)).